Here is a 379-residue protein sequence, read N- to C-terminus: Putative 2-hydroxyacid dehydrogenase YGL185C (379 aa).

NAD(+) is bound by residues 207 to 208 (SI), 291 to 293 (LGR), and D317. R293 is a catalytic residue. Residue E322 is part of the active site. H341 acts as the Proton donor in catalysis. Position 341–344 (341–344 (HLGS)) interacts with NAD(+).

It belongs to the D-isomer specific 2-hydroxyacid dehydrogenase family.

This chain is Putative 2-hydroxyacid dehydrogenase YGL185C, found in Saccharomyces cerevisiae (strain ATCC 204508 / S288c) (Baker's yeast).